A 483-amino-acid chain; its full sequence is NADH-quinone oxidoreductase subunit N (483 aa).

14 helical membrane-spanning segments follow: residues 8 to 28, 45 to 65, 78 to 98, 106 to 126, 131 to 151, 166 to 186, 206 to 226, 241 to 261, 275 to 295, 303 to 323, 330 to 350, 373 to 393, 399 to 419, and 452 to 472; these read INLA…GLLL, IAAG…GATQ, FAAF…VVSW, LGNG…MFMI, FLVL…LAAY, FVLG…IYGV, MLGI…KIAA, PTSV…AALF, WGPI…LAGL, LLAY…AVGN, VLVY…LILV, LALL…LAGF, IFMA…VLFS, and AIVG…GSLM.

It belongs to the complex I subunit 2 family. NDH-1 is composed of 14 different subunits. Subunits NuoA, H, J, K, L, M, N constitute the membrane sector of the complex.

It localises to the cell inner membrane. It catalyses the reaction a quinone + NADH + 5 H(+)(in) = a quinol + NAD(+) + 4 H(+)(out). Functionally, NDH-1 shuttles electrons from NADH, via FMN and iron-sulfur (Fe-S) centers, to quinones in the respiratory chain. The immediate electron acceptor for the enzyme in this species is believed to be ubiquinone. Couples the redox reaction to proton translocation (for every two electrons transferred, four hydrogen ions are translocated across the cytoplasmic membrane), and thus conserves the redox energy in a proton gradient. The polypeptide is NADH-quinone oxidoreductase subunit N (Magnetococcus marinus (strain ATCC BAA-1437 / JCM 17883 / MC-1)).